A 101-amino-acid polypeptide reads, in one-letter code: Biogenesis of lysosome-related organelles complex 1 subunit BLS1 (101 aa).

The protein belongs to the BLOC1S1 family. Component of the biogenesis of lysosome-related organelles complex-1 (BLOC-1).

The protein localises to the endosome. Functionally, component of the biogenesis of lysosome-related organelles complex-1 (BLOC-1), a complex involved in endosomal cargo sorting. The protein is Biogenesis of lysosome-related organelles complex 1 subunit BLS1 (BLS1) of Zygosaccharomyces rouxii (strain ATCC 2623 / CBS 732 / NBRC 1130 / NCYC 568 / NRRL Y-229).